We begin with the raw amino-acid sequence, 203 residues long: MHKDSNIIDELIFSFAQLPGLGNRSARRIVLYLMQDKEVRIKNLNNQLTSVLNNIMECDYCGNLDIVSICNICKHSERDSSTIAVVESVADLWALERSKVFKGWYHVLGKTLSAVSGNDAVNSLKLPKLLNRIREYKVQEIILATNSTIDGQMTAFFVIDYLKDENLKISKLASGIPLGGELDYLDEGTLLAAFKARQSHDLL.

The C4-type zinc-finger motif lies at 58-73; it reads CDYCGNLDIVSICNIC. One can recognise a Toprim domain in the interval 81 to 177; it reads STIAVVESVA…KISKLASGIP (97 aa).

It belongs to the RecR family.

Functionally, may play a role in DNA repair. It seems to be involved in an RecBC-independent recombinational process of DNA repair. It may act with RecF and RecO. This Orientia tsutsugamushi (strain Ikeda) (Rickettsia tsutsugamushi) protein is Recombination protein RecR.